Here is a 1370-residue protein sequence, read N- to C-terminus: DNA-directed RNA polymerase subunit beta (1370 aa).

The protein belongs to the RNA polymerase beta chain family. As to quaternary structure, the RNAP catalytic core consists of 2 alpha, 1 beta, 1 beta' and 1 omega subunit. When a sigma factor is associated with the core the holoenzyme is formed, which can initiate transcription.

The enzyme catalyses RNA(n) + a ribonucleoside 5'-triphosphate = RNA(n+1) + diphosphate. DNA-dependent RNA polymerase catalyzes the transcription of DNA into RNA using the four ribonucleoside triphosphates as substrates. The chain is DNA-directed RNA polymerase subunit beta from Geobacter sulfurreducens (strain ATCC 51573 / DSM 12127 / PCA).